Consider the following 220-residue polypeptide: NVDFDSESPRKPEIQNEIIDLHNSLRRSVNPTASNMLRMEWYPEAAANAERWAFRCTLNHSPRDSRVIDGIKCGENIYMSPYPIKWTAIIHKWHDEKKNFVYGIGASPANAVIGHYTQIVWYKSYRGGCAAAYCPSSAYKYFYVCQYCPAGNIIGKTATPYKSGPPCGDCPSACDNGLCTNPCTREDEFINCNDLVKQGCQTDYLKSNCAASCFCHSEIK.

An SCP domain is found at Asp20–Tyr147. Intrachain disulfides connect Cys56/Cys134, Cys73/Cys148, Cys129/Cys145, Cys167/Cys174, Cys170/Cys179, Cys183/Cys215, Cys192/Cys209, and Cys200/Cys213. The region spanning Cys183–Cys215 is the ShKT domain.

Expressed by the venom gland.

The protein resides in the secreted. In terms of biological role, blocks contraction of smooth muscle elicited by high potassium-induced depolarization, but does not block caffeine-stimulated contraction. May target voltage-gated calcium channels in smooth muscle. This is Cysteine-rich venom protein from Echis coloratus (Carpet viper).